The sequence spans 390 residues: Altered inheritance of mitochondria protein 6 (390 aa).

A signal peptide spans 1–26 (MLGLKGCLTILIGYVIAVCALFSSRG).

The protein belongs to the AIM6 family.

This is Altered inheritance of mitochondria protein 6 (AIM6) from Saccharomyces cerevisiae (strain RM11-1a) (Baker's yeast).